Reading from the N-terminus, the 342-residue chain is Anthranilate phosphoribosyltransferase (342 aa).

5-phospho-alpha-D-ribose 1-diphosphate is bound by residues Gly84, 87–88 (GD), Thr92, 94–97 (NIST), 112–120 (KHGNRGVSS), and Ser124. Gly84 is a binding site for anthranilate. Position 96 (Ser96) interacts with Mg(2+). Asn115 contributes to the anthranilate binding site. Arg170 provides a ligand contact to anthranilate. Residues Asp229 and Glu230 each contribute to the Mg(2+) site.

The protein belongs to the anthranilate phosphoribosyltransferase family. Homodimer. It depends on Mg(2+) as a cofactor.

The enzyme catalyses N-(5-phospho-beta-D-ribosyl)anthranilate + diphosphate = 5-phospho-alpha-D-ribose 1-diphosphate + anthranilate. It participates in amino-acid biosynthesis; L-tryptophan biosynthesis; L-tryptophan from chorismate: step 2/5. Its function is as follows. Catalyzes the transfer of the phosphoribosyl group of 5-phosphorylribose-1-pyrophosphate (PRPP) to anthranilate to yield N-(5'-phosphoribosyl)-anthranilate (PRA). The chain is Anthranilate phosphoribosyltransferase from Cupriavidus metallidurans (strain ATCC 43123 / DSM 2839 / NBRC 102507 / CH34) (Ralstonia metallidurans).